We begin with the raw amino-acid sequence, 247 residues long: Probable transcriptional regulatory protein Dvul_0986 (247 aa).

The disordered stretch occupies residues 1-22; it reads MAGHSKWANIQHRKGRQDAKRG.

The protein belongs to the TACO1 family.

Its subcellular location is the cytoplasm. This is Probable transcriptional regulatory protein Dvul_0986 from Nitratidesulfovibrio vulgaris (strain DP4) (Desulfovibrio vulgaris).